The sequence spans 488 residues: Calcium/calmodulin-dependent protein kinase type II subunit delta (488 aa).

A2 carries the post-translational modification N-acetylalanine. The Protein kinase domain occupies 14–272 (YQLFEELGKG…ASEALKHPWI (259 aa)). Residues 20 to 28 (LGKGAFSVV) and K43 contribute to the ATP site. D136 serves as the catalytic Proton acceptor. The segment at 283–292 (HRQETVDCLK) is autoinhibitory domain. T287 carries the post-translational modification Phosphothreonine; by autocatalysis. Residues 291 to 301 (LKKFNARRKLK) are calmodulin-binding. Residues T306 and T307 each carry the phosphothreonine; by autocatalysis modification. Position 315 is a phosphoserine (S315). Residue K317 is modified to N6-acetyllysine. 2 positions are modified to phosphoserine: S318 and S340. The disordered stretch occupies residues 325-350 (GVKKRKSSSSVQMMESTESSNTTIED). Positions 332–347 (SSSVQMMESTESSNTT) are enriched in polar residues. The residue at position 341 (T341) is a Phosphothreonine. Residue S343 is modified to Phosphoserine. Residues T346 and T347 each carry the phosphothreonine modification. Residue S414 is modified to Phosphoserine.

Belongs to the protein kinase superfamily. CAMK Ser/Thr protein kinase family. CaMK subfamily. As to quaternary structure, CAMK2 is composed of 4 different chains: alpha (CAMK2A), beta (CAMK2B), gamma (CAMK2G), and delta (CAMK2D). The different isoforms assemble into homo- or heteromultimeric holoenzymes composed of 12 subunits with two hexameric rings stacked one on top of the other. Interacts with RRAD and CACNB2. Post-translationally, autophosphorylation of Thr-287 following activation by Ca(2+)/calmodulin. Phosphorylation of Thr-287 locks the kinase into an activated state.

The protein resides in the cell membrane. The protein localises to the sarcolemma. Its subcellular location is the sarcoplasmic reticulum membrane. The catalysed reaction is L-seryl-[protein] + ATP = O-phospho-L-seryl-[protein] + ADP + H(+). It catalyses the reaction L-threonyl-[protein] + ATP = O-phospho-L-threonyl-[protein] + ADP + H(+). Its activity is regulated as follows. Activated by Ca(2+)/calmodulin. Binding of calmodulin results in conformational change that relieves intrasteric autoinhibition and allows autophosphorylation of Thr-287 which turns the kinase in a constitutively active form and confers to the kinase a Ca(2+)-independent activity. Functionally, calcium/calmodulin-dependent protein kinase involved in the regulation of Ca(2+) homeostatis and excitation-contraction coupling (ECC) in heart by targeting ion channels, transporters and accessory proteins involved in Ca(2+) influx into the myocyte, Ca(2+) release from the sarcoplasmic reticulum (SR), SR Ca(2+) uptake and Na(+) and K(+) channel transport. Targets also transcription factors and signaling molecules to regulate heart function. In its activated form, is involved in the pathogenesis of dilated cardiomyopathy and heart failure. Contributes to cardiac decompensation and heart failure by regulating SR Ca(2+) release via direct phosphorylation of RYR2 Ca(2+) channel on 'Ser-2808'. In the nucleus, phosphorylates the MEF2 repressor HDAC4, promoting its nuclear export and binding to 14-3-3 protein, and expression of MEF2 and genes involved in the hypertrophic program. Is essential for left ventricular remodeling responses to myocardial infarction. In pathological myocardial remodeling acts downstream of the beta adrenergic receptor signaling cascade to regulate key proteins involved in ECC. Regulates Ca(2+) influx to myocytes by binding and phosphorylating the L-type Ca(2+) channel subunit beta-2 CACNB2. In addition to Ca(2+) channels, can target and regulate the cardiac sarcolemmal Na(+) channel Nav1.5/SCN5A and the K+ channel Kv4.3/KCND3, which contribute to arrhythmogenesis in heart failure. Phosphorylates phospholamban (PLN/PLB), an endogenous inhibitor of SERCA2A/ATP2A2, contributing to the enhancement of SR Ca(2+) uptake that may be important in frequency-dependent acceleration of relaxation (FDAR) and maintenance of contractile function during acidosis. May participate in the modulation of skeletal muscle function in response to exercise, by regulating SR Ca(2+) transport through phosphorylation of PLN/PLB and triadin, a ryanodine receptor-coupling factor. In response to interferon-gamma (IFN-gamma) stimulation, catalyzes phosphorylation of STAT1, stimulating the JAK-STAT signaling pathway. This Bos taurus (Bovine) protein is Calcium/calmodulin-dependent protein kinase type II subunit delta (CAMK2D).